The chain runs to 151 residues: 3-hydroxyacyl-[acyl-carrier-protein] dehydratase FabZ (151 aa).

H56 is an active-site residue.

This sequence belongs to the thioester dehydratase family. FabZ subfamily.

It is found in the cytoplasm. The enzyme catalyses a (3R)-hydroxyacyl-[ACP] = a (2E)-enoyl-[ACP] + H2O. Its function is as follows. Involved in unsaturated fatty acids biosynthesis. Catalyzes the dehydration of short chain beta-hydroxyacyl-ACPs and long chain saturated and unsaturated beta-hydroxyacyl-ACPs. The polypeptide is 3-hydroxyacyl-[acyl-carrier-protein] dehydratase FabZ (Rhodopseudomonas palustris (strain ATCC BAA-98 / CGA009)).